The primary structure comprises 228 residues: Phosphatidate cytidylyltransferase (228 aa).

6 consecutive transmembrane segments (helical) span residues 31-51 (FVVAILWFKTLFYILMILVGL), 65-85 (IHYLLIGFIIIPIPISLLIFL), 93-113 (LVIMLYFCIIWSVDTFAMIGG), 131-151 (WTGLIIGTISAGLIAVLVSLI), 165-185 (IYLFIISCILALIAQSSDLFI), and 206-226 (GVLDRFDSIILTAPVFFGINI).

It belongs to the CDS family.

The protein localises to the cell membrane. The enzyme catalyses a 1,2-diacyl-sn-glycero-3-phosphate + CTP + H(+) = a CDP-1,2-diacyl-sn-glycerol + diphosphate. The protein operates within phospholipid metabolism; CDP-diacylglycerol biosynthesis; CDP-diacylglycerol from sn-glycerol 3-phosphate: step 3/3. The protein is Phosphatidate cytidylyltransferase (cdsA) of Rickettsia typhi (strain ATCC VR-144 / Wilmington).